The following is a 164-amino-acid chain: Inner membrane assembly complex subunit 17 (164 aa).

A mitochondrion-targeting transit peptide spans 1 to 28 (MIKTAKISTLRLAITRNARNLSFTTLVR). Over 29–97 (SPEVDNSKIK…NEVPLKRFTR (69 aa)) the chain is Mitochondrial matrix. Residues 98–118 (PLWIFILMASTFYLGAHLVWW) traverse the membrane as a helical segment. Residues 119 to 164 (KLAYEKKEVELKHKVDSLETTLKDVMKEKATGPTPCNNKKSWYKFW) are Mitochondrial intermembrane-facing. Residues 121 to 149 (AYEKKEVELKHKVDSLETTLKDVMKEKAT) adopt a coiled-coil conformation.

The protein belongs to the INA17 family. In terms of assembly, component of the inner membrane assembly (INA) complex, composed of INA17 and INA22. Interacts with a subset of F(1)F(0)-ATP synthase subunits of the F(1)-domain and the peripheral stalk.

The protein localises to the mitochondrion inner membrane. In terms of biological role, component of the INA complex (INAC) that promotes the biogenesis of mitochondrial F(1)F(0)-ATP synthase. INAC facilitates the assembly of the peripheral stalk and promotes the assembly of the catalytic F(1)-domain with the membrane-embedded F(0)-domain. In Candida glabrata (strain ATCC 2001 / BCRC 20586 / JCM 3761 / NBRC 0622 / NRRL Y-65 / CBS 138) (Yeast), this protein is Inner membrane assembly complex subunit 17.